Here is a 153-residue protein sequence, read N- to C-terminus: uncharacterized protein (153 aa).

The first 19 residues, 1–19 (MRKYIPLVLFIFSWPVLCA), serve as a signal peptide directing secretion. Catalysis depends on residues Arg46, Glu54, and Arg88.

This sequence belongs to the thermonuclease family.

This is an uncharacterized protein from Escherichia coli.